The following is a 400-amino-acid chain: Acetate kinase (400 aa).

Asn7 provides a ligand contact to Mg(2+). ATP is bound at residue Lys14. Arg91 lines the substrate pocket. The active-site Proton donor/acceptor is the Asp148. Residues 208–212 (HIGNG), 283–285 (DFR), and 332–336 (GIGEH) each bind ATP. Glu387 is a Mg(2+) binding site.

This sequence belongs to the acetokinase family. Homodimer. Mg(2+) serves as cofactor. Requires Mn(2+) as cofactor.

It localises to the cytoplasm. It carries out the reaction acetate + ATP = acetyl phosphate + ADP. Its pathway is metabolic intermediate biosynthesis; acetyl-CoA biosynthesis; acetyl-CoA from acetate: step 1/2. Its function is as follows. Catalyzes the formation of acetyl phosphate from acetate and ATP. Can also catalyze the reverse reaction. This Clostridium beijerinckii (strain ATCC 51743 / NCIMB 8052) (Clostridium acetobutylicum) protein is Acetate kinase.